A 92-amino-acid polypeptide reads, in one-letter code: Small ribosomal subunit protein uS19 (92 aa).

Belongs to the universal ribosomal protein uS19 family.

Its function is as follows. Protein S19 forms a complex with S13 that binds strongly to the 16S ribosomal RNA. This chain is Small ribosomal subunit protein uS19, found in Acidiphilium cryptum (strain JF-5).